A 288-amino-acid chain; its full sequence is Nucleotide-binding protein PM0169 (288 aa).

8–15 (GHSGAGKS) provides a ligand contact to ATP. 56-59 (DIRN) contributes to the GTP binding site.

The protein belongs to the RapZ-like family.

Its function is as follows. Displays ATPase and GTPase activities. This chain is Nucleotide-binding protein PM0169, found in Pasteurella multocida (strain Pm70).